The primary structure comprises 387 residues: Succinate--CoA ligase [ADP-forming] subunit beta (387 aa).

Residues 9 to 244 (KALLQRYGVN…WSQDDAKEAE (236 aa)) form the ATP-grasp domain. Residues K46, 53 to 55 (GRG), E99, L102, and E107 each bind ATP. The Mg(2+) site is built by N199 and D213. Substrate-binding positions include N264 and 321–323 (GIM).

It belongs to the succinate/malate CoA ligase beta subunit family. Heterotetramer of two alpha and two beta subunits. Requires Mg(2+) as cofactor.

It carries out the reaction succinate + ATP + CoA = succinyl-CoA + ADP + phosphate. The catalysed reaction is GTP + succinate + CoA = succinyl-CoA + GDP + phosphate. Its pathway is carbohydrate metabolism; tricarboxylic acid cycle; succinate from succinyl-CoA (ligase route): step 1/1. Its function is as follows. Succinyl-CoA synthetase functions in the citric acid cycle (TCA), coupling the hydrolysis of succinyl-CoA to the synthesis of either ATP or GTP and thus represents the only step of substrate-level phosphorylation in the TCA. The beta subunit provides nucleotide specificity of the enzyme and binds the substrate succinate, while the binding sites for coenzyme A and phosphate are found in the alpha subunit. This chain is Succinate--CoA ligase [ADP-forming] subunit beta, found in Methylobacillus flagellatus (strain ATCC 51484 / DSM 6875 / VKM B-1610 / KT).